We begin with the raw amino-acid sequence, 244 residues long: Probable metallo-hydrolase YhfI (244 aa).

Residues His59, His61, Asp63, His64, His134, Asp155, and His211 each coordinate Zn(2+).

This sequence belongs to the metallo-beta-lactamase superfamily. It depends on Zn(2+) as a cofactor.

This chain is Probable metallo-hydrolase YhfI (yhfI), found in Bacillus subtilis (strain 168).